The following is a 450-amino-acid chain: Na(+)/H(+) antiporter NhaA 2 (450 aa).

The next 12 helical transmembrane spans lie at 43-63 (VGGA…NSPW), 86-106 (LTLG…VVGL), 124-144 (ALPM…FVAV), 155-175 (GWAI…AVIS), 185-205 (FLLT…AVFY), 208-228 (EINL…ALCV), 234-254 (SWWL…ESGV), 258-278 (VAGV…AGGP), 299-319 (VAVP…VSGL), 326-346 (PITL…IFLT), 364-384 (WIDV…SLLI), and 398-418 (FVKV…AVLL).

Belongs to the NhaA Na(+)/H(+) (TC 2.A.33) antiporter family.

The protein localises to the cell membrane. The catalysed reaction is Na(+)(in) + 2 H(+)(out) = Na(+)(out) + 2 H(+)(in). Na(+)/H(+) antiporter that extrudes sodium in exchange for external protons. This is Na(+)/H(+) antiporter NhaA 2 from Mycobacterium sp. (strain JLS).